The chain runs to 277 residues: Large ribosomal subunit protein uL2c (277 aa).

Positions 228–254 are disordered; the sequence is VDHPHGGGEGRCPVGHAQPRTPWGKPA.

The protein belongs to the universal ribosomal protein uL2 family. In terms of assembly, part of the 50S ribosomal subunit.

The protein resides in the plastid. It is found in the chloroplast. In Ostreococcus tauri, this protein is Large ribosomal subunit protein uL2c (rpl2).